The following is a 115-amino-acid chain: MHEFSICQALITQVEQIAISHGALKVQSVKLRIGSLSGVELPLLEHAYPFASAGTLVEGSTLEIERAPLKVNCEACGLESEVKANLLTCRMCGSCLIRVVSGEELTLMSVELITT.

Histidine 2 lines the Ni(2+) pocket. 4 residues coordinate Zn(2+): cysteine 73, cysteine 76, cysteine 89, and cysteine 92.

The protein belongs to the HypA/HybF family.

Its function is as follows. Involved in the maturation of [NiFe] hydrogenases. Required for nickel insertion into the metal center of the hydrogenase. The protein is Hydrogenase maturation factor HypA of Nitrosospira multiformis (strain ATCC 25196 / NCIMB 11849 / C 71).